Consider the following 258-residue polypeptide: Uroplakin-1a (258 aa).

Residues M1–P14 are Cytoplasmic-facing. The helical transmembrane segment at V15–F35 threads the bilayer. Over A36 to D59 the chain is Extracellular. The chain crosses the membrane as a helical span at residues V60–L86. Topologically, residues C87–S91 are cytoplasmic. A helical membrane pass occupies residues M92–I112. Over T113–T230 the chain is Extracellular. N170 carries an N-linked (GlcNAc...) asparagine glycan. A helical membrane pass occupies residues W231–M252. Over Y253–L258 the chain is Cytoplasmic.

It belongs to the tetraspanin (TM4SF) family. As to quaternary structure, homodimer; disulfide-linked. Interacts with uroplakin-2 (UPK2). Post-translationally, the N-terminus is blocked. In terms of processing, N-glycosylated with high-mannose oligosaccharides. In terms of tissue distribution, bladder epithelium.

Its subcellular location is the membrane. Functionally, component of the asymmetric unit membrane (AUM); a highly specialized biomembrane elaborated by terminally differentiated urothelial cells. May play an important role in normal bladder epithelial physiology, possibly in regulating membrane permeability of superficial umbrella cells or in stabilizing the apical membrane through AUM/cytoskeletal interactions. This is Uroplakin-1a (UPK1A) from Bos taurus (Bovine).